A 415-amino-acid polypeptide reads, in one-letter code: von Willebrand factor A domain-containing protein 1 (415 aa).

A signal peptide spans 1–18 (MLFWTVLSMALSLRLALA). The region spanning 34-213 (DLLFLLDSSA…ELRGAIIDAM (180 aa)) is the VWFA domain. Phosphoserine occurs at positions 74, 80, and 93. 2 consecutive Fibronectin type-III domains span residues 214–305 (QPHQ…LQEE) and 307–405 (GPER…VPQA). N264 is a glycosylation site (N-linked (GlcNAc...) asparagine). An intrachain disulfide couples C369 to C393.

Homodimer or homomultimer; disulfide-linked. Interacts with HSPG2. In terms of processing, N-glycosylated.

Its subcellular location is the secreted. The protein resides in the extracellular space. It localises to the extracellular matrix. It is found in the basement membrane. Its function is as follows. Promotes matrix assembly. Involved in the organization of skeletal muscles and in the formation of neuromuscular junctions. This Rattus norvegicus (Rat) protein is von Willebrand factor A domain-containing protein 1 (Vwa1).